The sequence spans 249 residues: uncharacterized protein (249 aa).

2 helical membrane passes run 49–69 (ILLS…CYLL) and 223–243 (IVMS…VHHL).

The protein localises to the cell membrane. This is an uncharacterized protein from Bacillus anthracis.